Here is a 782-residue protein sequence, read N- to C-terminus: MSKNIDDKNEDGKKIKIIKLRKKVVKIVTHNDLSGKNNPSGSTDLHKHNNKVEYSHSRDGRTGGYSQNRDGRTGGYSQNRDGRTGGYSQNRDSLTSQYQGSTKKTYVAKNNTQNKYTTSVSFRRVIKTKVPSIVSSASSTDSENSKELNRKLGEKKKQQQESQKSYKRKKAETESKTIEQKVFEQLQKKKRENLANPIPKSIDIMGSITVSDLARKMNLKSSDLIAKLMALGVMVTINEKIDSDTATILVEEYGSKVNVVSIYDETVIEEEVEDQSKRIEKPPVITIMGHVDHGKTRLLSVLQNIDINQTESGGITQHIGAYTIVYNSREITFLDTPGHEAFTMMRSRGAQVTDIVVLVVSAIDGVMPQTIEAINHAKEANVPIIVAINKIDLPDSNPDKIKHQLSEYDLVPEDWGGDTIFVLISALKNIGISELLDMILLQADMMLLKANPSKRAIGKVLDAKIDLGRGIVCSVIIEDGTLYVGDSFVGGACYGKVKALINDKGVSVKSVGPAKAISVLGFSSMPQAGDPFQVTKTEKEAKLISSKRQDLKKYESSKNVKKVTMLNLYDSIKEGTLKELKIILKADVQGSVEALKNSLEKLTNDEVRVRVVHSSAGVITETDISFASASDAIVIGFHVRPTVKAQILADQEKVEIRKYNVIYDAISDVKSVLEGMLEPDVEQQFIGFAEVRAVINVPKVGVIAGCYVSRGLIKRDAITNVMRDGLQIHSGKISSLKRFKDDVKEVAEQYECGIMIDNYANIKEGDIIEAFEVKKVKKTFKT.

The span at 1-14 (MSKNIDDKNEDGKK) shows a compositional bias: basic and acidic residues. Disordered stretches follow at residues 1-106 (MSKN…KKTY) and 132-174 (SIVS…AETE). The span at 15 to 25 (IKIIKLRKKVV) shows a compositional bias: basic residues. Residues 31–43 (NDLSGKNNPSGST) show a composition bias toward polar residues. The span at 44-61 (DLHKHNNKVEYSHSRDGR) shows a compositional bias: basic and acidic residues. 2 stretches are compositionally biased toward polar residues: residues 86–106 (GYSQ…KKTY) and 133–142 (IVSSASSTDS). Positions 143 to 159 (ENSKELNRKLGEKKKQQ) are enriched in basic and acidic residues. The tr-type G domain maps to 280-453 (EKPPVITIMG…DMMLLKANPS (174 aa)). The segment at 289-296 (GHVDHGKT) is G1. 289 to 296 (GHVDHGKT) is a binding site for GTP. The segment at 314 to 318 (GITQH) is G2. Positions 335-338 (DTPG) are G3. Residues 335–339 (DTPGH) and 389–392 (NKID) each bind GTP. A G4 region spans residues 389 to 392 (NKID). The G5 stretch occupies residues 425–427 (SAL).

This sequence belongs to the TRAFAC class translation factor GTPase superfamily. Classic translation factor GTPase family. IF-2 subfamily.

It is found in the cytoplasm. In terms of biological role, one of the essential components for the initiation of protein synthesis. Protects formylmethionyl-tRNA from spontaneous hydrolysis and promotes its binding to the 30S ribosomal subunits. Also involved in the hydrolysis of GTP during the formation of the 70S ribosomal complex. In Borreliella afzelii (strain PKo) (Borrelia afzelii), this protein is Translation initiation factor IF-2.